Here is a 490-residue protein sequence, read N- to C-terminus: 5'-3' exonuclease PLD3 (490 aa).

The Cytoplasmic segment spans residues 1–38; sequence MKPKLMYQELKVPAEEPASELPMNEIEAWKAAEKKARW. Residues 39 to 59 traverse the membrane as a helical; Signal-anchor for type II membrane protein segment; sequence VLLVLILAVVGFGALMTQLFL. At 60–490 the chain is on the lumenal side; it reads WEYGDLHLFG…DSVGNACRLL (431 aa). 2 disulfides stabilise this stretch: cysteine 77-cysteine 239 and cysteine 81-cysteine 237. Asparagine 97 and asparagine 132 each carry an N-linked (GlcNAc...) asparagine glycan. The 28-residue stretch at 196-223 folds into the PLD phosphodiesterase 1 domain; that stretch reads THGVLHTKFWVVDQTHFYLGSANMDWRS. Catalysis depends on residues histidine 201, lysine 203, and aspartate 208. Histidine 201 serves as the catalytic Proton donor. Positions 201 and 203 each coordinate phosphate. Asparagine 218 lines the phosphate pocket. 3 N-linked (GlcNAc...) asparagine glycosylation sites follow: asparagine 236, asparagine 284, and asparagine 387. Residues cysteine 366 and cysteine 487 are joined by a disulfide bond. The region spanning 411 to 437 is the PLD phosphodiesterase 2 domain; that stretch reads YARVNHNKYMVTERATYIGTSNWSGSY. Histidine 416 contributes to the phosphate binding site. Residue histidine 416 is the Nucleophile of the active site. A Mg(2+)-binding site is contributed by phenylalanine 438.

Belongs to the phospholipase D family. In terms of assembly, homodimer. Interacts with APP. In terms of processing, N-glycosylated. Proteolytically processed to a soluble form that is stable within endosomes and lysosomes. During transport through the secretory pathway becomes proteolysed by cysteine proteases, thereby releasing a stable soluble lysosomal lumenal polypeptide, whereas the transmembrane-bound fragment is rapidly degraded. Its transport route to lysosomes involves ubiquitination and the ESCRT complex. Post-translationally, ubiquitinated. Ubiquitination mediates sorting into lysosomes.

The protein resides in the endoplasmic reticulum membrane. It is found in the lysosome lumen. The protein localises to the early endosome membrane. It localises to the late endosome membrane. Its subcellular location is the golgi apparatus membrane. The protein resides in the endosome membrane. The enzyme catalyses Exonucleolytic cleavage in the 5'- to 3'-direction to yield nucleoside 3'-phosphates.. The catalysed reaction is a 5'-end 5'-dephospho-ribonucleotidyl-ribonucleotide-RNA + H2O = a ribonucleoside 3'-phosphate + a 5'-end dephospho-ribonucleoside-RNA + H(+). It catalyses the reaction a ribonucleoside 3'-phosphate-2'-3'-cyclophospho-GMP + H2O = a ribonucleoside 3'-phosphate + 2',3'-cyclophospho-GMP + H(+). It carries out the reaction a 5'-end 5'-dephospho-2'-deoxyribonucleotidyl-2'-deoxyribonucleotide in single-stranded DNA + H2O = a 5'-end dephospho-2'-deoxyribonucleoside in single-stranded DNA + a 2'-deoxyribonucleoside 3'-phosphate + H(+). The enzyme catalyses a 5'-end 5'-phospho-2'-deoxyribonucleotide in single-stranded DNA + H2O = a 5'-end 5'-dephospho-2'-deoxyribonucleotide in single-stranded DNA + phosphate. The catalysed reaction is a 3-lyso-sn-glycero-1-phospho-(3'-acyl-1'-sn-glycerol) + a 1-acyl-sn-glycerol = a 3-acyl-sn-glycero-1-phospho-(3'-acyl-1'-sn-glycerol) + glycerol. It catalyses the reaction 3-lyso-sn-glycero-1-phospho-(3'-(9Z-octadecenoyl)-1'-sn-glycerol) + 1-(9Z-octadecenoyl)-sn-glycerol = 3-(9Z-octadecenoyl)-sn-glycero-1-phospho-(3'-(9Z-octadecenoyl)-1'-sn-glycerol) + glycerol. 5'-&gt;3' exonuclease that hydrolyzes the phosphodiester bond of single-stranded DNA (ssDNA) and RNA molecules to form nucleoside 3'-monophosphates and 5'-end 5'-hydroxy deoxyribonucleotide/ribonucleotide fragments. Partially redundant with PLD4, can cleave all four nucleotides displaying higher efficiency for ssDNA and RNA fragments initiated with uridine and guanosine residues and lower efficiency for cytidine-initiated substrates. As a result, it does not always degrade polynucleotides to the single nucleotide level, it can stall at specific sites sparing certain fragments from exonucleolytic degradation. Processes self and pathogenic ssDNA and RNA molecules that reach the endolysosomal compartment via phagocytosis or autophagy and may serve as 'danger' signals for recognition by innate immune receptors such as toll-like receptors (TLRs). Degrades mitochondrial CpG-rich ssDNA fragments to prevent TLR9 activation and autoinflammatory response, but it can cleave viral RNA to generate ligands for TLR7 activation and initiate antiviral immune responses. In plasmacytoid dendritic cells, it cooperates with endonuclease RNASET2 to release 2',3'-cyclic guanosine monophosphate (2',3'-cGMP), a potent stimulatory ligand for TLR7. Produces 2',3'-cGMPs and cytidine-rich RNA fragments that occupy TLR7 ligand-binding pockets and trigger a signaling-competent state. Can exert polynucleotide phosphatase activity toward 5'-phosphorylated ssDNA substrates although at a slow rate. Transphosphatidylase that catalyzes the exchange with R to S stereo-inversion of the glycerol moiety between (S,R)-lysophosphatidylglycerol (LPG) and monoacylglycerol (MAG) substrates to yield (S,S)-bis(monoacylglycero)phosphate (BMP). Can synthesize a variety of (S,S)-BMPs representing the main phospholipid constituent of lysosomal intralumenal vesicle (ILV) membranes that bind acid hydrolases for lipid degradation. Regulates the homeostasis and interorganellar communication of the endolysosomal system with an overall impact on cellular removal of dysfunctional organelles via autophagy as well as proper protein and lipid turnover. May play a role in myotube formation in response to ER stress. This chain is 5'-3' exonuclease PLD3 (PLD3), found in Bos taurus (Bovine).